The following is a 263-amino-acid chain: Acyl-[acyl-carrier-protein]--UDP-N-acetylglucosamine O-acyltransferase (263 aa).

This sequence belongs to the transferase hexapeptide repeat family. LpxA subfamily. Homotrimer.

It is found in the cytoplasm. The enzyme catalyses a (3R)-hydroxyacyl-[ACP] + UDP-N-acetyl-alpha-D-glucosamine = a UDP-3-O-[(3R)-3-hydroxyacyl]-N-acetyl-alpha-D-glucosamine + holo-[ACP]. It participates in glycolipid biosynthesis; lipid IV(A) biosynthesis; lipid IV(A) from (3R)-3-hydroxytetradecanoyl-[acyl-carrier-protein] and UDP-N-acetyl-alpha-D-glucosamine: step 1/6. Involved in the biosynthesis of lipid A, a phosphorylated glycolipid that anchors the lipopolysaccharide to the outer membrane of the cell. The sequence is that of Acyl-[acyl-carrier-protein]--UDP-N-acetylglucosamine O-acyltransferase from Tolumonas auensis (strain DSM 9187 / NBRC 110442 / TA 4).